The sequence spans 255 residues: Imidazole glycerol phosphate synthase subunit HisF (255 aa).

Residues aspartate 11 and aspartate 130 contribute to the active site.

This sequence belongs to the HisA/HisF family. In terms of assembly, heterodimer of HisH and HisF.

It localises to the cytoplasm. It catalyses the reaction 5-[(5-phospho-1-deoxy-D-ribulos-1-ylimino)methylamino]-1-(5-phospho-beta-D-ribosyl)imidazole-4-carboxamide + L-glutamine = D-erythro-1-(imidazol-4-yl)glycerol 3-phosphate + 5-amino-1-(5-phospho-beta-D-ribosyl)imidazole-4-carboxamide + L-glutamate + H(+). It functions in the pathway amino-acid biosynthesis; L-histidine biosynthesis; L-histidine from 5-phospho-alpha-D-ribose 1-diphosphate: step 5/9. IGPS catalyzes the conversion of PRFAR and glutamine to IGP, AICAR and glutamate. The HisF subunit catalyzes the cyclization activity that produces IGP and AICAR from PRFAR using the ammonia provided by the HisH subunit. The protein is Imidazole glycerol phosphate synthase subunit HisF of Rhodopseudomonas palustris (strain HaA2).